The chain runs to 100 residues: C-X-C motif chemokine 2 (100 aa).

An N-terminal signal peptide occupies residues 1–27 (MAPPTCRLLSAALVLLLLLATNHQATG). Cystine bridges form between C36–C62 and C38–C78.

Belongs to the intercrine alpha (chemokine CxC) family. Homotetramer.

Its subcellular location is the secreted. Chemotactic for human polymorphonuclear leukocytes but does not induce chemokinesis or an oxidative burst. This is C-X-C motif chemokine 2 (Cxcl2) from Mus musculus (Mouse).